The primary structure comprises 214 residues: Probable transaldolase (214 aa).

Lys-83 serves as the catalytic Schiff-base intermediate with substrate.

This sequence belongs to the transaldolase family. Type 3B subfamily.

The protein resides in the cytoplasm. It catalyses the reaction D-sedoheptulose 7-phosphate + D-glyceraldehyde 3-phosphate = D-erythrose 4-phosphate + beta-D-fructose 6-phosphate. It participates in carbohydrate degradation; pentose phosphate pathway; D-glyceraldehyde 3-phosphate and beta-D-fructose 6-phosphate from D-ribose 5-phosphate and D-xylulose 5-phosphate (non-oxidative stage): step 2/3. Functionally, transaldolase is important for the balance of metabolites in the pentose-phosphate pathway. This Brevibacillus brevis (strain 47 / JCM 6285 / NBRC 100599) protein is Probable transaldolase.